A 180-amino-acid polypeptide reads, in one-letter code: Transcription factor HES-7.1-B (180 aa).

In terms of domain architecture, bHLH spans 13 to 70 (HRKLLKPLVEKRRRERINNSLEKLRIFLSQTLKSEKLKNPKVEKAEILECTVQFLQSR). In terms of domain architecture, Orange spans 84–116 (YQSGFQHCLETTLHFMNSKPDMNGVTKELLSHQ). The short motif at 176–179 (WRPW) is the WRPW motif element.

In terms of assembly, transcription repression requires formation of a complex with a corepressor protein of the Groucho/TLE family. Expressed in the presumptive midbrain-hindbrain boundary (MHB) as early as the early gastrula stage (stage 10.5). Expression in the MHB continues through to tailbud stage. Also transiently expressed in the eye anlage at late neurula stage.

It is found in the nucleus. Transcriptional repressor. Represses transcription from both N box- and E box-containing promoters. Demarcates the prospective midbrain-hindbrain boundary (MHB) region in the neuroectoderm in early gastrulae embryos by repressing transcription of a number of target genes. This is Transcription factor HES-7.1-B (hes7.1-b) from Xenopus laevis (African clawed frog).